The primary structure comprises 151 residues: IFN signaling evasion protein OPG029 (151 aa).

This sequence belongs to the orthopoxvirus OPG029 family. In terms of assembly, interacts with host TANK, TBKBP1 and AZI2; these interactions prevent interferon production. Interacts with host STAT2.

In terms of biological role, prevents establishment of cellular antiviral state by blocking virus-induced phosphorylation and activation of interferon regulatory factors 3/IRF3 and 7/IRF7, transcription factors critical for the induction of interferons alpha and beta. This blockage is produced through the inhibition of host TBK1, by binding host TBK1 adapter proteins TBKBP1 and AZI2, thereby producing a strong inhibition of the phosphorylation and activation of IRF3 and IRF7. Also acts as an inhibitor of the cellular response to type I IFN by interacting with host STAT2. Mechanistically, exerts its inhibitory effect after host ISGF3 complex (composed of STAT1, STAT2 and IRF9) binding to the interferon stimulated response element (ISRE). The chain is IFN signaling evasion protein OPG029 (OPG029) from Homo sapiens (Human).